Reading from the N-terminus, the 520-residue chain is Ribonuclease Y (520 aa).

The helical transmembrane segment at 3–23 (FILVLCTVSSLFVGGGTGIFL) threads the bilayer. The KH domain maps to 209–272 (TVTAVTLPSE…QVAKMALERL (64 aa)). An HD domain is found at 335–429 (VLRHSIEVAS…VQASDCLSGA (95 aa)).

This sequence belongs to the RNase Y family.

The protein localises to the cell membrane. Functionally, endoribonuclease that initiates mRNA decay. The chain is Ribonuclease Y from Lawsonia intracellularis (strain PHE/MN1-00).